Consider the following 497-residue polypeptide: Cobyric acid synthase (497 aa).

Residues 257 to 431 (WLRVAAVRLP…WHGLLDNDDF (175 aa)) enclose the GATase cobBQ-type domain. The active-site Nucleophile is the Cys338. The active site involves His423.

It belongs to the CobB/CobQ family. CobQ subfamily.

Its pathway is cofactor biosynthesis; adenosylcobalamin biosynthesis. Its function is as follows. Catalyzes amidations at positions B, D, E, and G on adenosylcobyrinic A,C-diamide. NH(2) groups are provided by glutamine, and one molecule of ATP is hydrogenolyzed for each amidation. The sequence is that of Cobyric acid synthase from Mycolicibacterium paratuberculosis (strain ATCC BAA-968 / K-10) (Mycobacterium paratuberculosis).